The chain runs to 24 residues: Homotarsinin (24 aa).

R24 is modified (arginine amide).

Homodimer; disulfide-linked. Expressed by the skin glands.

Its subcellular location is the secreted. In terms of biological role, antimicrobial peptide. Active against Gram-negative bacteria E.coli ATCC 25922 (MIC=1.5 uM) and P.aeruginosa ATTC 27853 (MIC=23.2 uM) and against Gram-positive bacterium S.aureus ATCC 29313 (MIC=11.6 uM). Has no hemolytic activity. Associates with and disrupts membranes in vitro. The chain is Homotarsinin from Phyllomedusa tarsius (Brownbelly leaf frog).